Here is a 475-residue protein sequence, read N- to C-terminus: Sulfate adenylyltransferase subunit 1 (475 aa).

The tr-type G domain occupies 25-239; it reads KSLLRFLTCG…EVLETVEIQR (215 aa). Residues 34–41 form a G1 region; that stretch reads GSVDDGKS. Residue 34–41 coordinates GTP; sequence GSVDDGKS. Positions 92–96 are G2; that stretch reads GITID. The interval 113–116 is G3; sequence DTPG. GTP contacts are provided by residues 113–117 and 168–171; these read DTPGH and NKMD. Residues 168–171 are G4; it reads NKMD. Residues 206-208 are G5; it reads SAL.

This sequence belongs to the TRAFAC class translation factor GTPase superfamily. Classic translation factor GTPase family. CysN/NodQ subfamily. Heterodimer composed of CysD, the smaller subunit, and CysN.

The catalysed reaction is sulfate + ATP + H(+) = adenosine 5'-phosphosulfate + diphosphate. The protein operates within sulfur metabolism; hydrogen sulfide biosynthesis; sulfite from sulfate: step 1/3. With CysD forms the ATP sulfurylase (ATPS) that catalyzes the adenylation of sulfate producing adenosine 5'-phosphosulfate (APS) and diphosphate, the first enzymatic step in sulfur assimilation pathway. APS synthesis involves the formation of a high-energy phosphoric-sulfuric acid anhydride bond driven by GTP hydrolysis by CysN coupled to ATP hydrolysis by CysD. This chain is Sulfate adenylyltransferase subunit 1, found in Escherichia coli (strain UTI89 / UPEC).